The following is a 560-amino-acid chain: Dihydroxy-acid dehydratase (560 aa).

D78 is a binding site for Mg(2+). C119 contributes to the [2Fe-2S] cluster binding site. D120 and K121 together coordinate Mg(2+). K121 is modified (N6-carboxylysine). Position 192 (C192) interacts with [2Fe-2S] cluster. A Mg(2+)-binding site is contributed by E446. The Proton acceptor role is filled by S472.

Belongs to the IlvD/Edd family. As to quaternary structure, homodimer. [2Fe-2S] cluster is required as a cofactor. Mg(2+) serves as cofactor.

It carries out the reaction (2R)-2,3-dihydroxy-3-methylbutanoate = 3-methyl-2-oxobutanoate + H2O. The catalysed reaction is (2R,3R)-2,3-dihydroxy-3-methylpentanoate = (S)-3-methyl-2-oxopentanoate + H2O. It functions in the pathway amino-acid biosynthesis; L-isoleucine biosynthesis; L-isoleucine from 2-oxobutanoate: step 3/4. The protein operates within amino-acid biosynthesis; L-valine biosynthesis; L-valine from pyruvate: step 3/4. Functionally, functions in the biosynthesis of branched-chain amino acids. Catalyzes the dehydration of (2R,3R)-2,3-dihydroxy-3-methylpentanoate (2,3-dihydroxy-3-methylvalerate) into 2-oxo-3-methylpentanoate (2-oxo-3-methylvalerate) and of (2R)-2,3-dihydroxy-3-methylbutanoate (2,3-dihydroxyisovalerate) into 2-oxo-3-methylbutanoate (2-oxoisovalerate), the penultimate precursor to L-isoleucine and L-valine, respectively. In Anaeromyxobacter dehalogenans (strain 2CP-1 / ATCC BAA-258), this protein is Dihydroxy-acid dehydratase.